Reading from the N-terminus, the 275-residue chain is Phosphate import ATP-binding protein PstB 1 (275 aa).

Positions 22 to 261 (FNVEGVKVYY…SPTEQMFNSP (240 aa)) constitute an ABC transporter domain. 54–61 (GPSGCGKS) lines the ATP pocket.

It belongs to the ABC transporter superfamily. Phosphate importer (TC 3.A.1.7) family. In terms of assembly, the complex is composed of two ATP-binding proteins (PstB), two transmembrane proteins (PstC and PstA) and a solute-binding protein (PstS).

It is found in the cell inner membrane. The enzyme catalyses phosphate(out) + ATP + H2O = ADP + 2 phosphate(in) + H(+). Its function is as follows. Part of the ABC transporter complex PstSACB involved in phosphate import. Responsible for energy coupling to the transport system. In Trichormus variabilis (strain ATCC 29413 / PCC 7937) (Anabaena variabilis), this protein is Phosphate import ATP-binding protein PstB 1.